A 619-amino-acid chain; its full sequence is Histone H3.v1 (619 aa).

The span at 1–15 (MANKPKPSEHLRDLI) shows a compositional bias: basic and acidic residues. 2 disordered regions span residues 1 to 99 (MANK…GSSR) and 190 to 526 (ILPS…RKKR). Low complexity-rich tracts occupy residues 28 to 50 (QLKQ…LTQS) and 66 to 99 (STSE…GSSR). Over residues 230 to 287 (DQEEEEEEEEEEEEEEEEEEEEEEEEEEEEEEEEEEEEEEEEEEEEEEEEEEEEEEEV) the composition is skewed to acidic residues. Low complexity-rich tracts occupy residues 296 to 306 (GKPLPSPSLSS) and 314 to 325 (SSSVASSESSKQ). Residues 326 to 344 (SRVKVSKKPSPLIKKKPAP) show a composition bias toward basic residues. Low complexity-rich tracts occupy residues 345–360 (IKKV…QQQS), 385–408 (KNVL…LTPT), and 415–521 (IVTT…TPTT).

This sequence belongs to the histone H3 family.

The protein is Histone H3.v1 (H3v1) of Dictyostelium discoideum (Social amoeba).